The chain runs to 269 residues: Neurotrophic factor BDNF precursor form (269 aa).

An N-terminal signal peptide occupies residues 1–18 (MTILFLTMVISYFSCMRA). A propeptide spanning residues 19 to 150 (APLRDAPGMR…AANMSMRVRR (132 aa)) is cleaved from the precursor. Disordered stretches follow at residues 39-61 (AATAPRGHGTPQSGGGPGQREEL) and 82-104 (AAHVGQGADKSQGGGGPSPVATA). A glycan (N-linked (GlcNAc...) asparagine) is linked at Asn143. Cystine bridges form between Cys163/Cys230, Cys208/Cys259, and Cys218/Cys261.

Belongs to the NGF-beta family.

Functionally, BDNF promotes the survival of neuronal populations that are all located either in the central nervous system or directly connected to it. This chain is Neurotrophic factor BDNF precursor form (bdnf), found in Xiphophorus maculatus (Southern platyfish).